A 327-amino-acid polypeptide reads, in one-letter code: Serpentine receptor class alpha-12 (327 aa).

The Extracellular segment spans residues 1 to 18 (MGCASEIQAEIFTSFGQL). A helical membrane pass occupies residues 19-39 (FYASFQTILFLATIIGSLLAI). The Cytoplasmic segment spans residues 40-53 (FELCKKTTVPDSTR). A helical transmembrane segment spans residues 54–74 (VLLIGSLFFANAHEFAYFTAP). The Extracellular segment spans residues 75–98 (LKVFQLNIFNTNTSCYPLISTRDC). A helical transmembrane segment spans residues 99–119 (IPTTTVLAMGISGNMLIQSAL). Residues 120-138 (SIDRLLATIFPFSYSRMRA) are Cytoplasmic-facing. The helical transmembrane segment at 139 to 159 (LPGFVLLIMVLIPAMFTYSWI) threads the bilayer. The Extracellular segment spans residues 160-185 (RLDIVLDDYQMFCSQWSANISTRANT). Residues 186-206 (FLEICSYLTVAHIIINCLIIL) form a helical membrane-spanning segment. Residues 207–234 (RNRAIEKRCRFDVTQRYLTSENLKTTQA) are Cytoplasmic-facing. A helical membrane pass occupies residues 235-255 (ICYLSIAQFLAMFMYSGGVLL). The Extracellular portion of the chain corresponds to 256–270 (MRKNRENIPTLIYFN). Residues 271-291 (VIVWVYAPPYACVSLAPLILF) traverse the membrane as a helical segment. The Cytoplasmic segment spans residues 292–327 (SLWNLKKQRHIQIKSVQSAQKETQDDYIRKLQKSWK).

The protein belongs to the nematode receptor-like protein sra family. Expressed in neurons RIF/RIG and PVT.

The protein resides in the membrane. This Caenorhabditis elegans protein is Serpentine receptor class alpha-12 (sra-12).